The sequence spans 110 residues: Dermcidin (110 aa).

Residues 1–19 (MRFMTLLFLTALAGALVCA) form the signal peptide. The interval 24–70 (AASAPGSGNPCHEASAAQKENAGEDPGLARQAPKPRKQRSSLLEKGL) is disordered. Residues S30 and S38 are each glycosylated (O-linked (Xyl...) (chondroitin sulfate) serine). Positions 50 to 62 (GLARQAPKPRKQR) are excised as a propeptide. The helical transmembrane segment at 64–108 (SLLEKGLDGAKKAVGGLGKLGKDAVEDLESVGKGAVHDVKDVLDS) threads the bilayer. E67 is a Zn(2+) binding site. The residue at position 68 (K68) is an N6-acetyllysine. Zn(2+) contacts are provided by D71, D86, D90, H100, and D104. Residue L110 is a propeptide.

As to quaternary structure, homohexamer. Mn(2+) serves as cofactor. Zn(2+) is required as a cofactor. In terms of tissue distribution, detected in urine (at protein level). Constitutively expressed in eccrine sweat gland cells (at protein level). Secreted into the sweat at a concentration of 1-10 micrograms/ml.

The protein localises to the secreted. It is found in the membrane. Found in sweat, has an antimicrobial activity during early bacterial colonization. The secreted peptide assembles into homohexameric complexes that can associate with and also insert into pathogen membranes. Once inserted in bacteria membranes forms anion channels probably altering the transmembrane potential essential for bacterial survival. Highly effective against E.coli, E.faecalis, S.aureus and C.albicans. Optimal pH and salt concentration resemble the conditions in sweat. Also exhibits proteolytic activity, cleaving on the C-terminal side of Arg and, to a lesser extent, Lys residues. In terms of biological role, promotes survival of neurons and displays phosphatase activity. It may bind IgG. This is Dermcidin from Homo sapiens (Human).